An 81-amino-acid polypeptide reads, in one-letter code: Insulin-like growth factor 1 (81 aa).

A propeptide spanning residues 1–4 (FASA) is cleaved from the precursor. A b region spans residues 5–33 (GPETLCGAELVDALQFVCGDRGFYFNKPT). 3 cysteine pairs are disulfide-bonded: Cys10–Cys52, Cys22–Cys65, and Cys51–Cys56. The c stretch occupies residues 34 to 45 (GYGSSSRRAPQT). The interval 46–66 (GIVDECCFRSCDLRRLEMYCA) is a. The interval 67 to 74 (PLKPAKAA) is d. Residues 75–81 (RSVRAQR) constitute a propeptide, e peptide.

It belongs to the insulin family. Forms a ternary complex with IGFR1 and ITGAV:ITGB3. Forms a ternary complex with IGFR1 and ITGA6:ITGB4.

Its subcellular location is the secreted. In terms of biological role, the insulin-like growth factors, isolated from plasma, are structurally and functionally related to insulin but have a much higher growth-promoting activity. May be a physiological regulator of [1-14C]-2-deoxy-D-glucose (2DG) transport and glycogen synthesis in osteoblasts. Stimulates glucose transport in bone-derived osteoblastic (PyMS) cells and is effective at much lower concentrations than insulin, not only regarding glycogen and DNA synthesis but also with regard to enhancing glucose uptake. May play a role in synapse maturation. Ca(2+)-dependent exocytosis of IGF1 is required for sensory perception of smell in the olfactory bulb. Acts as a ligand for IGF1R. Binds to the alpha subunit of IGF1R, leading to the activation of the intrinsic tyrosine kinase activity which autophosphorylates tyrosine residues in the beta subunit thus initiating a cascade of down-stream signaling events leading to activation of the PI3K-AKT/PKB and the Ras-MAPK pathways. Binds to integrins ITGAV:ITGB3 and ITGA6:ITGB4. Its binding to integrins and subsequent ternary complex formation with integrins and IGFR1 are essential for IGF1 signaling. Induces the phosphorylation and activation of IGFR1, MAPK3/ERK1, MAPK1/ERK2 and AKT1. As part of the MAPK/ERK signaling pathway, acts as a negative regulator of apoptosis in cardiomyocytes via promotion of STUB1/CHIP-mediated ubiquitination and degradation of ICER-type isoforms of CREM. This Suncus murinus (Asian house shrew) protein is Insulin-like growth factor 1.